The sequence spans 85 residues: Large ribosomal subunit protein bL27 (85 aa).

The disordered stretch occupies residues 1 to 25; sequence MAHKKAGSSSKNGRDSNPQYLGVKR. A compositionally biased stretch (polar residues) spans 7–19; sequence GSSSKNGRDSNPQ.

Belongs to the bacterial ribosomal protein bL27 family.

This Micrococcus luteus (strain ATCC 4698 / DSM 20030 / JCM 1464 / CCM 169 / CCUG 5858 / IAM 1056 / NBRC 3333 / NCIMB 9278 / NCTC 2665 / VKM Ac-2230) (Micrococcus lysodeikticus) protein is Large ribosomal subunit protein bL27.